Reading from the N-terminus, the 509-residue chain is Maturase K (509 aa).

Belongs to the intron maturase 2 family. MatK subfamily.

Its subcellular location is the plastid. It localises to the chloroplast. Functionally, usually encoded in the trnK tRNA gene intron. Probably assists in splicing its own and other chloroplast group II introns. This chain is Maturase K, found in Stylosanthes hamata (Caribbean stylo).